The following is an 808-amino-acid chain: DNA ligase (808 aa).

The segment at 1-30 (MSISDDISPVPPAPVSEPNAGQDAGQDAAP) is disordered. The span at 18 to 30 (PNAGQDAGQDAAP) shows a compositional bias: low complexity. NAD(+) is bound by residues 61 to 65 (DAEYD), 110 to 111 (SL), and aspartate 141. Lysine 143 (N6-AMP-lysine intermediate) is an active-site residue. Positions 164, 202, 334, and 358 each coordinate NAD(+). Cysteine 453, cysteine 456, cysteine 471, and cysteine 476 together coordinate Zn(2+). A BRCT domain is found at 644 to 733 (EGSGPLAGLR…GGDVPEDGDG (90 aa)). The tract at residues 720 to 808 (LEGRGGDVPE…PRKKDQHSLL (89 aa)) is disordered. Over residues 727-742 (VPEDGDGAPGNEDEAP) the composition is skewed to acidic residues. Over residues 746 to 773 (ADVPAAPEVLADAPAAISADASSGVAPG) the composition is skewed to low complexity. A compositionally biased stretch (basic and acidic residues) spans 779–792 (DRADMTDRTVRTDS).

This sequence belongs to the NAD-dependent DNA ligase family. LigA subfamily. Requires Mg(2+) as cofactor. The cofactor is Mn(2+).

The enzyme catalyses NAD(+) + (deoxyribonucleotide)n-3'-hydroxyl + 5'-phospho-(deoxyribonucleotide)m = (deoxyribonucleotide)n+m + AMP + beta-nicotinamide D-nucleotide.. Functionally, DNA ligase that catalyzes the formation of phosphodiester linkages between 5'-phosphoryl and 3'-hydroxyl groups in double-stranded DNA using NAD as a coenzyme and as the energy source for the reaction. It is essential for DNA replication and repair of damaged DNA. The chain is DNA ligase from Nitratidesulfovibrio vulgaris (strain DSM 19637 / Miyazaki F) (Desulfovibrio vulgaris).